Here is a 592-residue protein sequence, read N- to C-terminus: Arginine--tRNA ligase (592 aa).

Residues 134–144 carry the 'HIGH' region motif; it reads ANPTGPLHVGH.

Belongs to the class-I aminoacyl-tRNA synthetase family. In terms of assembly, monomer.

The protein localises to the cytoplasm. The catalysed reaction is tRNA(Arg) + L-arginine + ATP = L-arginyl-tRNA(Arg) + AMP + diphosphate. The polypeptide is Arginine--tRNA ligase (Coxiella burnetii (strain CbuK_Q154) (Coxiella burnetii (strain Q154))).